A 364-amino-acid chain; its full sequence is Histidinol-phosphate aminotransferase 1 (364 aa).

At K211 the chain carries N6-(pyridoxal phosphate)lysine.

It belongs to the class-II pyridoxal-phosphate-dependent aminotransferase family. Histidinol-phosphate aminotransferase subfamily. In terms of assembly, homodimer. Requires pyridoxal 5'-phosphate as cofactor.

It carries out the reaction L-histidinol phosphate + 2-oxoglutarate = 3-(imidazol-4-yl)-2-oxopropyl phosphate + L-glutamate. The protein operates within amino-acid biosynthesis; L-histidine biosynthesis; L-histidine from 5-phospho-alpha-D-ribose 1-diphosphate: step 7/9. This chain is Histidinol-phosphate aminotransferase 1, found in Legionella pneumophila (strain Paris).